We begin with the raw amino-acid sequence, 317 residues long: Melanocyte-stimulating hormone receptor (317 aa).

Topologically, residues 1–37 (MAVQGFQRRLLGSLNSTPTAIPQLGLAANQTGARCLE) are extracellular. Residue asparagine 29 is glycosylated (N-linked (GlcNAc...) asparagine). Residues 38–63 (VSIPDGLFLSLGLVSLVENVLVVATI) form a helical membrane-spanning segment. The Cytoplasmic portion of the chain corresponds to 64-72 (AKNRNLHSP). The chain crosses the membrane as a helical span at residues 73–93 (TYCFICCLALSDLLVSGGNVL). The Extracellular segment spans residues 94 to 118 (ETVVILLLEASALAARAAVVQPLDN). Residues 119–140 (VIDVITCSSMVSSLCFLGAIAM) form a helical membrane-spanning segment. At 141–163 (DRYVSIFYALRYHSIVTLPRARQ) the chain is on the cytoplasmic side. A helical membrane pass occupies residues 164–183 (AIAAIWVASVLFSTLFIAYY). At 184 to 191 (DHAAVLLC) the chain is on the extracellular side. A helical transmembrane segment spans residues 192 to 211 (LVVFFLAMLVLMAVLYVHML). Residues 212-240 (ARACQHAQGIARLHKRQRPLHQGFGLKGA) lie on the Cytoplasmic side of the membrane. The helical transmembrane segment at 241–266 (VTLTILLGIFFLCWGPFFLHLTLIVL) threads the bilayer. The Extracellular portion of the chain corresponds to 267–279 (CPQHPTCSCIFKN). A helical membrane pass occupies residues 280-300 (FNLFLTLIICNAIIDPLIYAF). The Cytoplasmic portion of the chain corresponds to 301 to 317 (RRQELRRTLKEGLTCSW). Residue cysteine 315 is the site of S-palmitoyl cysteine attachment.

Belongs to the G-protein coupled receptor 1 family. Interacts with MGRN1, but does not undergo MGRN1-mediated ubiquitination; this interaction competes with GNAS-binding and thus inhibits agonist-induced cAMP production. Interacts with OPN3; the interaction results in a decrease in MC1R-mediated cAMP signaling and ultimately a decrease in melanin production in melanocytes.

The protein localises to the cell membrane. Its function is as follows. Receptor for MSH (alpha, beta and gamma) and ACTH. The activity of this receptor is mediated by G proteins which activate adenylate cyclase. Mediates melanogenesis, the production of eumelanin (black/brown) and phaeomelanin (red/yellow), via regulation of cAMP signaling in melanocytes. The protein is Melanocyte-stimulating hormone receptor (MC1R) of Hylobates lar (Lar gibbon).